Reading from the N-terminus, the 267-residue chain is MSCLVLPLVSVGNIPQLSIDWLLNSQANEWEYLEALDSKYLVEFVGPLDRPEDGSDSLYKDADMKYSSALEVFYNKKRGLFAIQQRTPLVSVNYLNNFIVEIILPFLSKYNISEICIWDSLYAMEDENGVIVRPQEVYSLGEFYFDDEAELLSNLHLNDQESMVNNWLHFTPTSFQDKISVDQPIFKILFQILNASQRPKALRSIKYCSCLANEGDNSLDSQQFLQWIISQKVIKNAPPIVKFVRPISWQGAYGMADARDKFVDLYN.

It belongs to the PSMG2 family. In terms of assembly, component of the 20S proteasome chaperone. Forms a heterodimer with PBA1 that binds to proteasome precursors.

Its subcellular location is the cytoplasm. Involved in 20S proteasome assembly. Required for maximal proteasome activity. Affects the chymotrypsin-like activity of the proteasome. Can be degraded by the proteasome. Involved in the endoplasmic reticulum-associated degradation (ERAD). This is Proteasome assembly chaperone 2 (ADD66) from Saccharomyces cerevisiae (strain ATCC 204508 / S288c) (Baker's yeast).